The sequence spans 222 residues: Eukaryotic translation initiation factor 4E-1 (222 aa).

A compositionally biased stretch (basic and acidic residues) spans 1 to 22 (MVDEVEKPASLEESKTNTREVE). Residues 1–37 (MVDEVEKPASLEESKTNTREVEEGAEEVIESDDTMSS) form a disordered region. Residues 23–33 (EGAEEVIESDD) are compositionally biased toward acidic residues. 2 EIF4G-binding regions span residues 47–50 (HPLE) and 57–93 (FDNPSGKSKQAAWGSSIRPIYTFSTVEDFWSVYNNIH). MRNA is bound by residues 65-70 (KQAAWG), lysine 97, and 115-116 (WE). Residues cysteine 120 and cysteine 158 are joined by a disulfide bond. Residues 141–150 (YTLLAMIGEQ) are EIF4G-binding. MRNA-binding positions include 165–170 (RVRQEK) and 210–214 (KKLDR).

Belongs to the eukaryotic initiation factor 4E family. EIF4F is a multi-subunit complex, the composition of which varies with external and internal environmental conditions. It is composed of at least EIF4A, EIF4E and EIF4G. EIF4E is also known to interact with other partners. In higher plants two isoforms of EIF4F have been identified, named isoform EIF4F and isoform EIF(iso)4F. Isoform EIF4F has subunits p220 and p26, whereas isoform EIF(iso)4F has subunits p82 and p28. In terms of processing, according to the redox status, the Cys-120-Cys-158 disulfide bridge may have a role in regulating protein function by affecting its ability to bind capped mRNA. In terms of tissue distribution, expressed ubiquitously in seedlings, roots, leaves, sepals, petals, anthers and dehisced pollen, with highest levels in pollen, maturing anthers and roots. Strongly expressed in susceptible plants but not in resistant ones.

It is found in the nucleus. Its subcellular location is the cytoplasm. Component of the protein complex eIF4F, which is involved in the recognition of the mRNA cap, ATP-dependent unwinding of 5'-terminal secondary structure and recruitment of mRNA to the ribosome. Recognizes and binds the 7-methylguanosine-containing mRNA cap during an early step in the initiation of protein synthesis and facilitates ribosome binding by inducing the unwinding of the mRNAs secondary structures. Key component of recessive resistance to potyviruses. Its function is as follows. (Microbial infection) Susceptibility host factor required for viral infection (e.g. potato virus Y (PVY) and pepper mottle virus (PepMoV)) by recruiting viral RNAs to the host ribosomal complex via an interaction with viral genome-linked protein (VPg). This is Eukaryotic translation initiation factor 4E-1 from Nicotiana tabacum (Common tobacco).